We begin with the raw amino-acid sequence, 386 residues long: SWI/SNF-related matrix-associated actin-dependent regulator of chromatin subfamily B member 1 (386 aa).

A DNA-binding region spans residues 1 to 114 (MMMMALSKTF…DEKYKAVSIS (114 aa)).

The protein belongs to the SNF5 family. As to quaternary structure, component of the multiprotein chromatin-remodeling complexes SWI/SNF. Component of neural progenitors-specific chromatin remodeling complex (npBAF complex) and the neuron-specific chromatin remodeling complex (nBAF complex). Component of the BAF (SWI/SNF) chromatin remodeling complex. Component of the SWI/SNF-B (PBAF) chromatin remodeling complex. Binds to double-stranded DNA.

It localises to the nucleus. Functionally, involved in chromatin-remodeling. Core component of the BAF (SWI/SNF) complex. This ATP-dependent chromatin-remodeling complex plays important roles in cell proliferation and differentiation, in cellular antiviral activities and inhibition of tumor formation. Belongs to the neural progenitors-specific chromatin remodeling complex (npBAF complex) and the neuron-specific chromatin remodeling complex (nBAF complex) and may play a role in neural development. The chain is SWI/SNF-related matrix-associated actin-dependent regulator of chromatin subfamily B member 1 (SMARCB1) from Gallus gallus (Chicken).